A 125-amino-acid chain; its full sequence is Fluoride-specific ion channel FluC (125 aa).

Transmembrane regions (helical) follow at residues 3 to 23 (FILIAIGGAFGALFRYFVSKV), 33 to 53 (IPLGTVIVNVLGAFLLSFVLF), 65 to 85 (FVLFFGTGFLGAFTTFSTFAY), and 99 to 119 (LVYFFANLFFGFFAAFFGMVL). Na(+) contacts are provided by Gly-75 and Thr-78.

The protein belongs to the fluoride channel Fluc/FEX (TC 1.A.43) family.

It is found in the cell inner membrane. It carries out the reaction fluoride(in) = fluoride(out). With respect to regulation, na(+) is not transported, but it plays an essential structural role and its presence is essential for fluoride channel function. Functionally, fluoride-specific ion channel. Important for reducing fluoride concentration in the cell, thus reducing its toxicity. In Thermosipho melanesiensis (strain DSM 12029 / CIP 104789 / BI429), this protein is Fluoride-specific ion channel FluC.